A 167-amino-acid polypeptide reads, in one-letter code: Ribonuclease H (167 aa).

One can recognise an RNase H type-1 domain in the interval 1 to 143 (MYKQIEIFTD…CDQLARKAAK (143 aa)). The Mg(2+) site is built by aspartate 10, glutamate 48, aspartate 70, and aspartate 135.

Belongs to the RNase H family. As to quaternary structure, monomer. Mg(2+) is required as a cofactor.

It localises to the cytoplasm. It carries out the reaction Endonucleolytic cleavage to 5'-phosphomonoester.. Its function is as follows. Endonuclease that specifically degrades the RNA of RNA-DNA hybrids. The sequence is that of Ribonuclease H from Blochmanniella floridana.